A 678-amino-acid polypeptide reads, in one-letter code: DNA ligase (678 aa).

NAD(+) is bound by residues 36–40 (DSEFD), 85–86 (SL), and Glu117. The active-site N6-AMP-lysine intermediate is Lys119. Residues Arg140, Glu177, Lys294, and Lys318 each contribute to the NAD(+) site. Cys412, Cys415, Cys430, and Cys436 together coordinate Zn(2+). The BRCT domain occupies 595–678 (IIDAPLLGKT…TWWQHYGNAV (84 aa)).

It belongs to the NAD-dependent DNA ligase family. LigA subfamily. Requires Mg(2+) as cofactor. Mn(2+) serves as cofactor.

The catalysed reaction is NAD(+) + (deoxyribonucleotide)n-3'-hydroxyl + 5'-phospho-(deoxyribonucleotide)m = (deoxyribonucleotide)n+m + AMP + beta-nicotinamide D-nucleotide.. Functionally, DNA ligase that catalyzes the formation of phosphodiester linkages between 5'-phosphoryl and 3'-hydroxyl groups in double-stranded DNA using NAD as a coenzyme and as the energy source for the reaction. It is essential for DNA replication and repair of damaged DNA. The protein is DNA ligase of Dichelobacter nodosus (strain VCS1703A).